Consider the following 192-residue polypeptide: A-type ATP synthase subunit E (192 aa).

This sequence belongs to the V-ATPase E subunit family. As to quaternary structure, has multiple subunits with at least A(3), B(3), C, D, E, F, H, I and proteolipid K(x).

The protein resides in the cell membrane. Its function is as follows. Component of the A-type ATP synthase that produces ATP from ADP in the presence of a proton gradient across the membrane. The chain is A-type ATP synthase subunit E from Methanoculleus marisnigri (strain ATCC 35101 / DSM 1498 / JR1).